The following is a 68-amino-acid chain: Conotoxin Cal14.13b (68 aa).

The N-terminal stretch at 1 to 20 (MKLCVVIVLLMLAMPFNGGE) is a signal peptide. The propeptide occupies 21 to 68 (ASRFFNQHARSQRSGMKTRGIWCDPPCPEGETCRGGECSDEFNGDMGR). Met-66 carries the post-translational modification Methionine amide.

Contains 2 disulfide bonds. In terms of tissue distribution, expressed by the venom duct.

It is found in the secreted. Its function is as follows. Probable neurotoxin with unknown target. Possibly targets ion channels. The polypeptide is Conotoxin Cal14.13b (Californiconus californicus (California cone)).